The chain runs to 759 residues: Probable Na(+)/H(+) antiporter C3A11.09 (759 aa).

11 consecutive transmembrane segments (helical) span residues H12–I32, L36–A56, M105–I125, S133–G153, E172–I192, I206–A226, F244–V264, V295–P315, M319–A339, A361–A381, and V415–M435. The residue at position 442 (T442) is a Phosphothreonine. S446 is subject to Phosphoserine. T448 carries the phosphothreonine modification. 5 stretches are compositionally biased toward basic and acidic residues: residues L514–A529, Y537–E547, I590–A601, N622–R647, and S655–Q671. Disordered stretches follow at residues L514 to D558, S578 to R606, and N622 to E759. Residues N696–N713 are compositionally biased toward polar residues. N-linked (GlcNAc...) asparagine glycosylation is found at N699 and N713. Over residues R724–E733 the composition is skewed to low complexity. Position 735 is a phosphoserine (S735).

This sequence belongs to the fungal Na(+)/H(+) exchanger family.

Its subcellular location is the membrane. Its function is as follows. Sodium export from cell, takes up external protons in exchange for internal sodium ions. The sequence is that of Probable Na(+)/H(+) antiporter C3A11.09 (sod22) from Schizosaccharomyces pombe (strain 972 / ATCC 24843) (Fission yeast).